Here is a 323-residue protein sequence, read N- to C-terminus: Beta-ketoacyl-[acyl-carrier-protein] synthase III (323 aa).

Active-site residues include Cys-112 and His-249. Residues Gln-250–Arg-254 form an ACP-binding region. Asn-279 is an active-site residue.

The protein belongs to the thiolase-like superfamily. FabH family. As to quaternary structure, homodimer.

It localises to the cytoplasm. It catalyses the reaction malonyl-[ACP] + acetyl-CoA + H(+) = 3-oxobutanoyl-[ACP] + CO2 + CoA. Its pathway is lipid metabolism; fatty acid biosynthesis. Catalyzes the condensation reaction of fatty acid synthesis by the addition to an acyl acceptor of two carbons from malonyl-ACP. Catalyzes the first condensation reaction which initiates fatty acid synthesis and may therefore play a role in governing the total rate of fatty acid production. Possesses both acetoacetyl-ACP synthase and acetyl transacylase activities. Its substrate specificity determines the biosynthesis of branched-chain and/or straight-chain of fatty acids. The protein is Beta-ketoacyl-[acyl-carrier-protein] synthase III of Clostridium kluyveri (strain NBRC 12016).